The following is a 323-amino-acid chain: Down-regulator of invasive growth 2 (323 aa).

Residues 1–10 (MNKEEQEDPQ) are compositionally biased toward acidic residues. The tract at residues 1–26 (MNKEEQEDPQQEQISTVQENDPRNLQ) is disordered. A compositionally biased stretch (polar residues) spans 11–26 (QEQISTVQENDPRNLQ). Position 34 is a phosphoserine (Ser34). The disordered stretch occupies residues 67–87 (LSQKEEDHSGKPPTITTSPAE). Residues Ser225, Ser266, and Ser270 each carry the phosphoserine modification.

Forms a complex with DIG1, STE12 and either FUS3 or KSS1. The interaction of FUS3 with STE12 depends on the presence of both DIG1 and DIG2. STE12 is lost from FUS3/DIG1/DIG2 complex after pheromone treatment. DIG1 and DIG2 have also been reported to interact with CLN1 and CLN2. In terms of processing, phosphorylated by FUS3 and KSS1, in a pheromone-stimulated manner.

It is found in the nucleus. DIG2 and DIG1 are negative regulators of the filamentation and pheromone induced mating program. DIG1 and DIG2 inhibit the transcriptional activity of STE12 by direct protein-protein interaction. DIG2 binds to the DNA binding domain (DBD) of STE12 and thus inhibits transcription when overexpressed. The sequence is that of Down-regulator of invasive growth 2 (DIG2) from Saccharomyces cerevisiae (strain ATCC 204508 / S288c) (Baker's yeast).